The chain runs to 2264 residues: RNA1 polyprotein (2264 aa).

Residues methionine 566–glycine 1156 are Cytoplasmic-facing. One can recognise an SF3 helicase domain in the interval threonine 750 to proline 916. Position 780 to 787 (glycine 780 to serine 787) interacts with ATP. Residues cysteine 1157–tryptophan 1177 form a helical membrane-spanning segment. The Lumenal portion of the chain corresponds to lysine 1178 to lysine 1203. The 210-residue stretch at alanine 1227–leucine 1436 folds into the Peptidase C3 domain. Residues histidine 1270, glutamate 1308, and cysteine 1400 each act as for picornain 3C-like protease activity in the active site. Residues asparagine 1713–phenylalanine 1841 form the RdRp catalytic domain.

This sequence belongs to the nepoviruses RNA1 polyprotein family. Post-translationally, specific enzymatic cleavages by picornain 3C-like protease in vivo yield mature proteins. Picornain 3C-like protease is autocatalytically processed. VPg is uridylylated by the polymerase and is covalently linked to the 5'-end of genomic RNA. This uridylylated form acts as a nucleotide-peptide primer for the polymerase.

The protein localises to the host endoplasmic reticulum lumen. It localises to the host endoplasmic reticulum membrane. The enzyme catalyses RNA(n) + a ribonucleoside 5'-triphosphate = RNA(n+1) + diphosphate. Functionally, picornain 3C-like protease is a thiol protease that cleaves the P1 and P2 polyproteins. This Beet ringspot virus (BRSV) protein is RNA1 polyprotein.